A 240-amino-acid polypeptide reads, in one-letter code: ATP-dependent Clp protease proteolytic subunit 2 (240 aa).

S132 (nucleophile) is an active-site residue. H157 is an active-site residue.

This sequence belongs to the peptidase S14 family. As to quaternary structure, fourteen ClpP subunits assemble into 2 heptameric rings which stack back to back to give a disk-like structure with a central cavity, resembling the structure of eukaryotic proteasomes.

Its subcellular location is the cytoplasm. The catalysed reaction is Hydrolysis of proteins to small peptides in the presence of ATP and magnesium. alpha-casein is the usual test substrate. In the absence of ATP, only oligopeptides shorter than five residues are hydrolyzed (such as succinyl-Leu-Tyr-|-NHMec, and Leu-Tyr-Leu-|-Tyr-Trp, in which cleavage of the -Tyr-|-Leu- and -Tyr-|-Trp bonds also occurs).. In terms of biological role, cleaves peptides in various proteins in a process that requires ATP hydrolysis. Has a chymotrypsin-like activity. Plays a major role in the degradation of misfolded proteins. The sequence is that of ATP-dependent Clp protease proteolytic subunit 2 from Synechococcus elongatus (strain ATCC 33912 / PCC 7942 / FACHB-805) (Anacystis nidulans R2).